Consider the following 336-residue polypeptide: tRNA pseudouridine synthase D (336 aa).

D84 functions as the Nucleophile in the catalytic mechanism. Positions 164–298 constitute a TRUD domain; it reads GVPNYFGEQR…TPSYRWLVGD (135 aa).

Belongs to the pseudouridine synthase TruD family.

It catalyses the reaction uridine(13) in tRNA = pseudouridine(13) in tRNA. Its function is as follows. Responsible for synthesis of pseudouridine from uracil-13 in transfer RNAs. In Cellvibrio japonicus (strain Ueda107) (Pseudomonas fluorescens subsp. cellulosa), this protein is tRNA pseudouridine synthase D.